A 265-amino-acid chain; its full sequence is GTP cyclohydrolase FolE2 (265 aa).

It belongs to the GTP cyclohydrolase IV family.

It catalyses the reaction GTP + H2O = 7,8-dihydroneopterin 3'-triphosphate + formate + H(+). The protein operates within cofactor biosynthesis; 7,8-dihydroneopterin triphosphate biosynthesis; 7,8-dihydroneopterin triphosphate from GTP: step 1/1. Its function is as follows. Converts GTP to 7,8-dihydroneopterin triphosphate. The chain is GTP cyclohydrolase FolE2 from Bordetella petrii (strain ATCC BAA-461 / DSM 12804 / CCUG 43448).